Consider the following 636-residue polypeptide: Probable potassium transport system protein Kup (636 aa).

12 helical membrane passes run 22–42 (MGLLVAAVGVVYGDIGTSPLY), 64–84 (ILSLILWSLLWVVSFKYVMFI), 114–134 (ALMVGCGLVGASLFYGDSMIT), 150–170 (FEGIDHWVVPISLVVLVALFL), 182–202 (LFGPIMVTWFVVLGALGVHGI), 220–240 (FFIVHPGMGVAILGAVVLALT), 261–281 (WFALVLPALVLNYFGQGAILL), 293–313 (LLAPGWALLPLVGLATMATVI), 351–371 (IYIGAVNWTLMVGVVLLVIGF), 383–403 (VAVTGTMLMTTILVSAVMLLL), 408–428 (PVLAVPLLVGFLLVDGLFFAA), and 433–453 (IVQGGAFPVLAGIVLFVLMST).

Belongs to the HAK/KUP transporter (TC 2.A.72) family.

It localises to the cell inner membrane. The enzyme catalyses K(+)(in) + H(+)(in) = K(+)(out) + H(+)(out). Functionally, transport of potassium into the cell. Likely operates as a K(+):H(+) symporter. The protein is Probable potassium transport system protein Kup of Pseudomonas entomophila (strain L48).